The following is a 368-amino-acid chain: Isopentenyl-diphosphate delta-isomerase (368 aa).

Position 7–8 (7–8) interacts with substrate; the sequence is RK. Residues Thr-65, 66 to 68, Ser-96, and Asn-125 contribute to the FMN site; that span reads GMT. A substrate-binding site is contributed by 96 to 98; that stretch reads SQR. Gln-160 provides a ligand contact to substrate. Glu-161 is a binding site for Mg(2+). FMN is bound by residues Lys-193, Ser-218, Thr-223, 275 to 277, and 296 to 297; these read GIR and AL.

It belongs to the IPP isomerase type 2 family. In terms of assembly, homooctamer. Dimer of tetramers. The cofactor is FMN. NADPH serves as cofactor. It depends on Mg(2+) as a cofactor.

The protein localises to the cytoplasm. It catalyses the reaction isopentenyl diphosphate = dimethylallyl diphosphate. In terms of biological role, involved in the biosynthesis of isoprenoids. Catalyzes the 1,3-allylic rearrangement of the homoallylic substrate isopentenyl (IPP) to its allylic isomer, dimethylallyl diphosphate (DMAPP). The protein is Isopentenyl-diphosphate delta-isomerase of Saccharolobus solfataricus (strain ATCC 35092 / DSM 1617 / JCM 11322 / P2) (Sulfolobus solfataricus).